We begin with the raw amino-acid sequence, 451 residues long: Tubulin alpha-1A chain (451 aa).

The short motif at 1–4 is the MREC motif element; that stretch reads MREC. Residues Q11, E71, S140, G144, T145, T179, N206, and N228 each contribute to the GTP site. E71 is a Mg(2+) binding site. Residue E254 is part of the active site. The segment at 432 to 451 is disordered; that stretch reads YEEVGVDSVEGEGEEEGEEY. E445 is subject to 5-glutamyl polyglutamate.

The protein belongs to the tubulin family. In terms of assembly, dimer of alpha and beta chains. A typical microtubule is a hollow water-filled tube with an outer diameter of 25 nm and an inner diameter of 15 nM. Alpha-beta heterodimers associate head-to-tail to form protofilaments running lengthwise along the microtubule wall with the beta-tubulin subunit facing the microtubule plus end conferring a structural polarity. Microtubules usually have 13 protofilaments but different protofilament numbers can be found in some organisms and specialized cells. Mg(2+) is required as a cofactor. Some glutamate residues at the C-terminus are polyglycylated, resulting in polyglycine chains on the gamma-carboxyl group. Glycylation is mainly limited to tubulin incorporated into axonemes (cilia and flagella) whereas glutamylation is prevalent in neuronal cells, centrioles, axonemes, and the mitotic spindle. Both modifications can coexist on the same protein on adjacent residues, and lowering polyglycylation levels increases polyglutamylation, and reciprocally. The precise function of polyglycylation is still unclear. In terms of processing, some glutamate residues at the C-terminus are polyglutamylated, resulting in polyglutamate chains on the gamma-carboxyl group. Polyglutamylation plays a key role in microtubule severing by spastin (SPAST). SPAST preferentially recognizes and acts on microtubules decorated with short polyglutamate tails: severing activity by SPAST increases as the number of glutamates per tubulin rises from one to eight, but decreases beyond this glutamylation threshold. Post-translationally, undergoes a tyrosination/detyrosination cycle, the cyclic removal and re-addition of a C-terminal tyrosine residue by the enzymes tubulin tyrosine carboxypeptidase (MATCAP1, VASH1 or VASH2) and tubulin tyrosine ligase (TTL), respectively. Tyrosination promotes microtubule interaction with CAP-Gly microtubule plus-end tracking proteins. Tyrosinated tubulins regulate the initiation of dynein-driven motility. In terms of processing, detyrosination is involved in metaphase plate congression by guiding chromosomes during mitosis. Detyrosination increases microtubules-dependent mechanotransduction in dystrophic cardiac and skeletal muscle. In cardiomyocytes, detyrosinated microtubules are required to resist to contractile compression during contraction.

The protein resides in the cytoplasm. It is found in the cytoskeleton. The catalysed reaction is GTP + H2O = GDP + phosphate + H(+). Functionally, tubulin is the major constituent of microtubules, a cylinder consisting of laterally associated linear protofilaments composed of alpha- and beta-tubulin heterodimers. Microtubules grow by the addition of GTP-tubulin dimers to the microtubule end, where a stabilizing cap forms. Below the cap, tubulin dimers are in GDP-bound state, owing to GTPase activity of alpha-tubulin. This Gallus gallus (Chicken) protein is Tubulin alpha-1A chain (TUBA1A).